The chain runs to 482 residues: Potential E3 ubiquitin-protein ligase ariadne-2 (482 aa).

The interval 125–334 (AKGYCSVCAM…SEYYECSRYK (210 aa)) is TRIAD supradomain. The Zn(2+) site is built by C129, C132, C145, H147, C150, C153, C172, C177, C218, C223, C239, C242, C247, C250, H255, C260, C287, and C290. The RING-type 1 zinc finger occupies 129–177 (CSVCAMDGYTELPHLTCGHCFCEHCWKSHVESRLSEGVASRIECMESEC). Residues 198–260 (LKYERFLLRD…GADYHAPTSC (63 aa)) form an IBR-type zinc finger. The RING-type 2; atypical zinc finger occupies 287-316 (CPQCHSCIEKAGGCNHIQCTRCRHHFCWMC). C300 is an active-site residue. Zn(2+)-binding residues include C305, C308, C313, C316, H323, and C330. The stretch at 433-459 (FEYQQAQLEKEVEELAWAVERADGTAR) forms a coiled coil.

The protein belongs to the RBR family. Ariadne subfamily.

The protein resides in the nucleus. The enzyme catalyses [E2 ubiquitin-conjugating enzyme]-S-ubiquitinyl-L-cysteine + [acceptor protein]-L-lysine = [E2 ubiquitin-conjugating enzyme]-L-cysteine + [acceptor protein]-N(6)-ubiquitinyl-L-lysine.. Its function is as follows. Might act as an E3 ubiquitin-protein ligase, or as part of E3 complex, which accepts ubiquitin from specific E2 ubiquitin-conjugating enzymes, such as UBC-2/UBE2L3, and then transfers it to substrates. The sequence is that of Potential E3 ubiquitin-protein ligase ariadne-2 from Caenorhabditis elegans.